We begin with the raw amino-acid sequence, 192 residues long: Signal peptidase complex catalytic subunit SEC11C (192 aa).

Topologically, residues 2–28 are cytoplasmic; it reads VRAGAVGTHLPASGLDIFGDLRKMNKR. Residues 29-48 traverse the membrane as a helical; Signal-anchor for type II membrane protein segment; sequence QLYYQVLNFAMIVSSALMIW. Residues 49 to 192 lie on the Lumenal side of the membrane; the sequence is KGLIVLTGSE…GAYVLLKRES (144 aa). Residues S68, H108, and D134 each act as charge relay system in the active site. A C-terminal short (CTS) helix region spans residues 177 to 188; it reads ALLAVMGAYVLL.

It belongs to the peptidase S26B family. In terms of assembly, component of the signal peptidase complex paralog C (SPC-C) composed of a catalytic subunit SEC11C and three accessory subunits SPCS1, SPCS2 and SPCS3. Within the complex, interacts with SPCS2 and SPCS3. The complex induces a local thinning of the ER membrane which is used to measure the length of the signal peptide (SP) h-region of protein substrates. This ensures the selectivity of the complex towards h-regions shorter than 18-20 amino acids. Post-translationally, may undergo processing at the N-terminus.

It localises to the endoplasmic reticulum membrane. The enzyme catalyses Cleavage of hydrophobic, N-terminal signal or leader sequences from secreted and periplasmic proteins.. Catalytic component of the signal peptidase complex (SPC) which catalyzes the cleavage of N-terminal signal sequences from nascent proteins as they are translocated into the lumen of the endoplasmic reticulum. Specifically cleaves N-terminal signal peptides that contain a hydrophobic alpha-helix (h-region) shorter than 18-20 amino acids. The polypeptide is Signal peptidase complex catalytic subunit SEC11C (SEC11C) (Canis lupus familiaris (Dog)).